A 399-amino-acid polypeptide reads, in one-letter code: Zinc finger HIT domain-containing protein 2 (399 aa).

Methionine 1 bears the N-acetylmethionine mark. Zn(2+) contacts are provided by cysteine 7, cysteine 10, cysteine 22, cysteine 25, cysteine 30, cysteine 34, histidine 38, and cysteine 41. The HIT-type zinc finger occupies 7–41 (CGFCPTGEAQPARYTCPRCNVPYCSLRCYRAHGSC). 2 disordered regions span residues 71 to 97 (LRQQRETEDEPGDAGLRPGPAPGGLSG) and 141 to 166 (EELGDAPSGDAEELEPSPARMPPEPV).

As to quaternary structure, interacts (via HIT-type zinc finger) with RUVBL2 in the presence of ATP or ADP; shows a stronger interaction in the presence of ADP.

May act as a bridging factor mediating the interaction between the R2TP/Prefoldin-like (R2TP/PFDL) complex and U5 small nuclear ribonucleoprotein (U5 snRNP). Required for the interaction of R2TP complex subunit RPAP3 and prefoldin-like subunit URI1 with U5 snRNP proteins EFTUD2 and PRPF8. May play a role in regulating the composition of the U5 snRNP complex. This chain is Zinc finger HIT domain-containing protein 2 (ZNHIT2), found in Bos taurus (Bovine).